Here is a 59-residue protein sequence, read N- to C-terminus: Large ribosomal subunit protein bL32 (59 aa).

Positions 1–16 (MAVPKRKVSPHRRGNR) are enriched in basic residues. The disordered stretch occupies residues 1 to 20 (MAVPKRKVSPHRRGNRRAHD).

It belongs to the bacterial ribosomal protein bL32 family.

The chain is Large ribosomal subunit protein bL32 from Erythrobacter litoralis (strain HTCC2594).